Consider the following 264-residue polypeptide: Small ribosomal subunit protein uS2 (264 aa).

It belongs to the universal ribosomal protein uS2 family.

The protein is Small ribosomal subunit protein uS2 of Helicobacter pylori (strain P12).